The primary structure comprises 663 residues: Polyunsaturated fatty acid lipoxygenase ALOX15 (663 aa).

Positions 2–115 (GVYRVCVSTG…VQSLPVGTGC (114 aa)) constitute a PLAT domain. A Lipoxygenase domain is found at 116 to 663 (TTVGDPQGLF…PSIVENSVAI (548 aa)). The Fe cation site is built by H361, H366, H541, H545, and I663.

Belongs to the lipoxygenase family. As to quaternary structure, interacts with PEBP1; in response to IL13/interleukin-13, prevents the interaction of PEBP1 with RAF1 to activate the ERK signaling cascade. The cofactor is Fe cation. Detected in reticulocytes (at protein level).

Its subcellular location is the cytoplasm. It is found in the cytosol. The protein resides in the cell membrane. It localises to the lipid droplet. It carries out the reaction (5Z,8Z,11Z,14Z)-eicosatetraenoate + O2 = (12S)-hydroperoxy-(5Z,8Z,10E,14Z)-eicosatetraenoate. The catalysed reaction is (5Z,8Z,11Z,14Z)-eicosatetraenoate + O2 = (15S)-hydroperoxy-(5Z,8Z,11Z,13E)-eicosatetraenoate. The enzyme catalyses (9Z,12Z)-octadecadienoate + O2 = (13S)-hydroperoxy-(9Z,11E)-octadecadienoate. It catalyses the reaction (5Z,8Z,11Z,14Z)-eicosatetraenoate + 2 O2 = (14R,15S)-dihydroperoxy-(5Z,8Z,10E,12E)-eicosatetraenoate. It carries out the reaction (5Z,8Z,11Z,14Z)-eicosatetraenoate + 2 O2 = (8S,15S)-dihydroperoxy-(5Z,9E,11Z,13E)-eicosatetraenoate. The catalysed reaction is (14S,15R)-epoxy-(5Z,8Z,11Z)-eicosatrienoate + O2 = (8S)-hydroperoxy-(14S,15R)-epoxy-(5Z,9E,11Z)-eicosatrienoate. The enzyme catalyses (14S,15R)-epoxy-(5Z,8Z,11Z)-eicosatrienoate + O2 = (12S)-hydroperoxy-(14S,15R)-epoxy-(5Z,8Z,10E)-eicosatrienoate. It catalyses the reaction (14R,15S)-epoxy-(5Z,8Z,11Z)-eicosatrienoate + O2 = (5S)-hydroperoxy-(14R,15S)-epoxy-(6E,8Z,11Z)-eicosatrienoate. It carries out the reaction (14R,15S)-epoxy-(5Z,8Z,11Z)-eicosatrienoate + O2 = (12S)-hydroperoxy-(14R,15S)-epoxy-(5Z,8Z,10E)-eicosatrienoate. The catalysed reaction is (15R)-hydroperoxy-(5Z,8Z,11Z,13E)-eicosatetraenoate = 15-oxo-(5Z,8Z,11Z,13E)-eicosatetraenoate + H2O. The enzyme catalyses (15S)-hydroperoxy-(5Z,8Z,11Z,13E)-eicosatetraenoate = (14S,15S)-epoxy-(5Z,8Z,10E,12E)-eicosatetraenoate + H2O. It catalyses the reaction (12S)-hydroperoxy-(5Z,8Z,10E,14Z)-eicosatetraenoate = (8S)-hydroxy-(11S,12S)-epoxy-(5Z,9E,14Z)-eicosatrienoate. It carries out the reaction (4Z,7Z,10Z,13Z,16Z)-docosapentaenoate + O2 = 14-hydroperoxy-(4Z,7Z,10Z,12E,16Z)-docosapentaenoate. The catalysed reaction is (7Z,10Z,13Z,16Z,19Z)-docosapentaenoate + O2 = 14-hydroperoxy-(7Z,10Z,12E,16Z,19Z)-docosapentaenoate. The enzyme catalyses (4Z,7Z,10Z,13Z,16Z,19Z)-docosahexaenoate + O2 = (14S)-hydroperoxy-(4Z,7Z,10Z,12E,16Z,19Z)-docosahexaenoate. It catalyses the reaction (4Z,7Z,10Z,13Z,16Z,19Z)-docosahexaenoate + O2 = (17S)-hydroperoxy-(4Z,7Z,10Z,13Z,15E,19Z)-docosahexaenoate. It carries out the reaction (7S)-hydroperoxy-(4Z,8E,10Z,13Z,16Z,19Z)-docosahexaenoate + O2 = (7S,14S)-dihydroperoxy-(4Z,8E,10Z,12E,16Z,19Z)-docosahexaenoate. The catalysed reaction is (7S)-hydroperoxy-(4Z,8E,10Z,13Z,16Z,19Z)-docosahexaenoate + O2 = (7S,17S)-dihydroperoxy-(4Z,8E,10Z,13Z,15E,19Z)-docosahexaenoate. The enzyme catalyses (4Z,7Z,10Z,13Z,16Z,19Z)-docosahexaenoate + O2 = (11S)-hydroperoxy-(4Z,7Z,9E,13Z,16Z,19Z)-docosahexaenoate. It catalyses the reaction N-(5Z,8Z,11Z,14Z)-eicosatetraenoyl-taurine + O2 = N-(15S)-hydroperoxy-(5Z,8Z,11Z,13E)-eicosatetraenoyl-taurine. It carries out the reaction N-(5Z,8Z,11Z,14Z)-eicosatetraenoyl-gamma-aminobutanoate + O2 = N-(15S)-hydroperoxy-(5Z,8Z,11Z,13E)-eicosatetraenoyl-gamma-aminobutanoate. The catalysed reaction is N-(5Z,8Z,11Z,14Z)-eicosatetraenoyl-glycine + O2 = N-(15S)-hydroperoxy-(5Z,8Z,11Z,13E)-eicosatetraenoyl-glycine. The enzyme catalyses N-(5Z,8Z,11Z,14Z)-eicosatetraenoyl-L-alanine + O2 = N-(15S)-hydroperoxy-(5Z,8Z,11Z,13E)-eicosatetraenoyl-alanine. It catalyses the reaction N-(5Z,8Z,11Z,14Z)-eicosatetraenoyl-taurine + O2 = N-(12S)-hydroperoxy-(5Z,8Z,10E,14Z)-eicosatetraenoyl-taurine. It carries out the reaction N-(5Z,8Z,11Z,14Z)-eicosatetraenoyl-gamma-aminobutanoate + O2 = N-(12S)-hydroperoxy-(5Z,8Z,10E,14Z)-eicosatetraenoyl-gamma-aminobutanoate. The catalysed reaction is N-(5Z,8Z,11Z,14Z)-eicosatetraenoyl-glycine + O2 = N-(12S)-hydroperoxy-(5Z,8Z,10E,14Z)-eicosatetraenoyl-glycine. The enzyme catalyses N-(5Z,8Z,11Z,14Z)-eicosatetraenoyl-L-alanine + O2 = N-(12S)-hydroperoxy-(5Z,8Z,10E,14Z)-eicosatetraenoyl-alanine. It participates in lipid metabolism; hydroperoxy eicosatetraenoic acid biosynthesis. In terms of biological role, non-heme iron-containing dioxygenase that catalyzes the stereo-specific peroxidation of free and esterified polyunsaturated fatty acids generating a spectrum of bioactive lipid mediators. It inserts peroxyl groups at C12 or C15 of arachidonate ((5Z,8Z,11Z,14Z)-eicosatetraenoate) producing both 12-hydroperoxyeicosatetraenoate/12-HPETE and 15-hydroperoxyeicosatetraenoate/15-HPETE. It may then act on 12-HPETE to produce hepoxilins, which may show pro-inflammatory properties. Can also peroxidize linoleate ((9Z,12Z)-octadecadienoate) to 13-hydroperoxyoctadecadienoate. May participate in the sequential oxidations of DHA ((4Z,7Z,10Z,13Z,16Z,19Z)-docosahexaenoate) to generate specialized pro-resolving mediators (SPMs)like resolvin D5 ((7S,17S)-diHPDHA) and (7S,14S)-diHPDHA, that actively down-regulate the immune response and have anti-aggregation properties with platelets. Can convert epoxy fatty acids to hydroperoxy-epoxides derivatives followed by an intramolecular nucleophilic substitution leading to the formation of monocyclic endoperoxides. Plays an important role during the maintenance of self-tolerance by peroxidizing membrane-bound phosphatidylethanolamine which can then signal the sorting process for clearance of apoptotic cells during inflammation and prevent an autoimmune response. In addition to its role in the immune and inflammatory responses, this enzyme may play a role in epithelial wound healing in the cornea through production of lipoxin A4 (LXA(4)) and docosahexaenoic acid-derived neuroprotectin D1 (NPD1; 10R,17S-HDHA), both lipid autacoids exhibit anti-inflammatory and neuroprotective properties. Furthermore, it may regulate actin polymerization which is crucial for several biological processes such as the phagocytosis of apoptotic cells. It is also implicated in the generation of endogenous ligands for peroxisome proliferator activated receptor (PPAR-gamma), hence modulating macrophage development and function. It may also exert a negative effect on skeletal development by regulating bone mass through this pathway. As well as participates in ER stress and downstream inflammation in adipocytes, pancreatic islets, and liver. Finally, it is also involved in the cellular response to IL13/interleukin-13. The chain is Polyunsaturated fatty acid lipoxygenase ALOX15 from Oryctolagus cuniculus (Rabbit).